A 289-amino-acid polypeptide reads, in one-letter code: Phospholipase A1 (289 aa).

Positions 1-20 are cleaved as a signal peptide; the sequence is MRTLQGWLLPVFMLPMAVYA. Residues 21–52 are Periplasmic-facing; that stretch reads QEATVKEVHDAPAVRGSIIANMLQEHDNPFTL. Residues 53–65 traverse the membrane as a beta stranded segment; sequence YPYDTNYLIYTQT. Residues 66–84 are Extracellular-facing; that stretch reads SDLNKEAIASYDWAENARK. A beta stranded membrane pass occupies residues 85 to 99; it reads DEVKFQLSLAFPLWR. Residues 100–105 are Periplasmic-facing; it reads GILGPN. The chain crosses the membrane as a beta stranded span at residues 106 to 118; that stretch reads SVLGASYTQKSWW. Topologically, residues 119 to 128 are extracellular; the sequence is QLSNSEESSP. Ser126 provides a ligand contact to Ca(2+). A beta stranded membrane pass occupies residues 129–148; the sequence is FRETNYEPQLFLGFATDYRF. Over 149 to 150 the chain is Periplasmic; sequence AG. Residues 151 to 164 form a beta stranded membrane-spanning segment; it reads WTLRDVEMGYNHDS. His162 (proton acceptor) is an active-site residue. Ser164 acts as the Nucleophile in catalysis. Topologically, residues 165 to 173 are extracellular; sequence NGRSDPTSR. Residues Arg167 and Ser172 each contribute to the Ca(2+) site. A beta stranded membrane pass occupies residues 174–186; it reads SWNRLYTRLMAEN. Residues 187–188 lie on the Periplasmic side of the membrane; it reads GN. Residues 189–198 traverse the membrane as a beta stranded segment; the sequence is WLVEVKPWYV. The Extracellular portion of the chain corresponds to 199–216; the sequence is VGNTDDNPDITKYMGYYQ. Position 204 (Asp204) interacts with Ca(2+). The beta stranded transmembrane segment at 217-223 threads the bilayer; it reads LKIGYHL. Residues 224-225 are Periplasmic-facing; that stretch reads GD. Residues 226–234 form a beta stranded membrane-spanning segment; that stretch reads AVLSAKGQY. The Extracellular segment spans residues 235-241; sequence NWNTGYG. A beta stranded membrane pass occupies residues 242–250; sequence GAELGLSYP. The Periplasmic segment spans residues 251-255; sequence ITKHV. The beta stranded transmembrane segment at 256-265 threads the bilayer; it reads RLYTQVYSGY. Residues 266–274 are Extracellular-facing; the sequence is GESLIDYNF. Residues 275–286 traverse the membrane as a beta stranded segment; that stretch reads NQTRVGVGVMLN. The Periplasmic portion of the chain corresponds to 287–289; sequence DLF.

The protein belongs to the phospholipase A1 family. Homodimer; dimerization is reversible, and the dimeric form is the active one. The cofactor is Ca(2+).

The protein localises to the cell outer membrane. The enzyme catalyses a 1,2-diacyl-sn-glycero-3-phosphocholine + H2O = a 2-acyl-sn-glycero-3-phosphocholine + a fatty acid + H(+). It carries out the reaction a 1,2-diacyl-sn-glycero-3-phosphocholine + H2O = a 1-acyl-sn-glycero-3-phosphocholine + a fatty acid + H(+). In terms of biological role, hydrolysis of phosphatidylcholine with phospholipase A2 (EC 3.1.1.4) and phospholipase A1 (EC 3.1.1.32) activities. The sequence is that of Phospholipase A1 (pldA) from Escherichia coli O157:H7.